A 192-amino-acid chain; its full sequence is uncharacterized protein (192 aa).

An N-terminal signal peptide occupies residues 1–17 (MFKKILFPLVALFMLAG). Residue cysteine 18 is the site of N-palmitoyl cysteine attachment. Residue cysteine 18 is the site of S-diacylglycerol cysteine attachment.

The protein to H.influenzae HI_0162.

It is found in the cell membrane. This is an uncharacterized protein from Escherichia coli O6:H1 (strain CFT073 / ATCC 700928 / UPEC).